Here is a 121-residue protein sequence, read N- to C-terminus: Ribosome-binding factor A (121 aa).

This sequence belongs to the RbfA family. Monomer. Binds 30S ribosomal subunits, but not 50S ribosomal subunits or 70S ribosomes.

Its subcellular location is the cytoplasm. In terms of biological role, one of several proteins that assist in the late maturation steps of the functional core of the 30S ribosomal subunit. Associates with free 30S ribosomal subunits (but not with 30S subunits that are part of 70S ribosomes or polysomes). Required for efficient processing of 16S rRNA. May interact with the 5'-terminal helix region of 16S rRNA. The polypeptide is Ribosome-binding factor A (Lactobacillus helveticus (strain DPC 4571)).